Consider the following 445-residue polypeptide: tRNA modification GTPase MnmE (445 aa).

Residues arginine 20, glutamate 79, and lysine 119 each contribute to the (6S)-5-formyl-5,6,7,8-tetrahydrofolate site. Positions 215–371 constitute a TrmE-type G domain; that stretch reads GLKLAIIGPP…ILKNIENIAE (157 aa). Asparagine 225 contributes to the K(+) binding site. GTP contacts are provided by residues 225-230, 244-250, and 269-272; these read NAGKSS, SNIAGTT, and DTAG. Mg(2+) is bound at residue serine 229. Serine 244, isoleucine 246, and threonine 249 together coordinate K(+). Residue threonine 250 participates in Mg(2+) binding. Lysine 445 lines the (6S)-5-formyl-5,6,7,8-tetrahydrofolate pocket.

The protein belongs to the TRAFAC class TrmE-Era-EngA-EngB-Septin-like GTPase superfamily. TrmE GTPase family. Homodimer. Heterotetramer of two MnmE and two MnmG subunits. The cofactor is K(+).

The protein localises to the cytoplasm. In terms of biological role, exhibits a very high intrinsic GTPase hydrolysis rate. Involved in the addition of a carboxymethylaminomethyl (cmnm) group at the wobble position (U34) of certain tRNAs, forming tRNA-cmnm(5)s(2)U34. This chain is tRNA modification GTPase MnmE, found in Rickettsia canadensis (strain McKiel).